The primary structure comprises 98 residues: Co-chaperonin GroES (98 aa).

The protein belongs to the GroES chaperonin family. As to quaternary structure, heptamer of 7 subunits arranged in a ring. Interacts with the chaperonin GroEL.

Its subcellular location is the cytoplasm. Together with the chaperonin GroEL, plays an essential role in assisting protein folding. The GroEL-GroES system forms a nano-cage that allows encapsulation of the non-native substrate proteins and provides a physical environment optimized to promote and accelerate protein folding. GroES binds to the apical surface of the GroEL ring, thereby capping the opening of the GroEL channel. The chain is Co-chaperonin GroES from Bartonella quintana (strain Toulouse) (Rochalimaea quintana).